The following is a 378-amino-acid chain: Erythronate-4-phosphate dehydrogenase (378 aa).

2 residues coordinate substrate: S45 and T66. Positions 146 and 175 each coordinate NAD(+). The active site involves R208. D232 serves as a coordination point for NAD(+). E237 is a catalytic residue. Catalysis depends on H254, which acts as the Proton donor. G257 serves as a coordination point for NAD(+). Position 258 (Y258) interacts with substrate.

This sequence belongs to the D-isomer specific 2-hydroxyacid dehydrogenase family. PdxB subfamily. As to quaternary structure, homodimer.

Its subcellular location is the cytoplasm. The enzyme catalyses 4-phospho-D-erythronate + NAD(+) = (R)-3-hydroxy-2-oxo-4-phosphooxybutanoate + NADH + H(+). Its pathway is cofactor biosynthesis; pyridoxine 5'-phosphate biosynthesis; pyridoxine 5'-phosphate from D-erythrose 4-phosphate: step 2/5. Functionally, catalyzes the oxidation of erythronate-4-phosphate to 3-hydroxy-2-oxo-4-phosphonooxybutanoate. The polypeptide is Erythronate-4-phosphate dehydrogenase (Cronobacter sakazakii (strain ATCC BAA-894) (Enterobacter sakazakii)).